Reading from the N-terminus, the 211-residue chain is MGSRDDEYDYLFKVVLIGDSGVGKSNLLSRFTRNEFNLESKSTIGVEFATRSISVEGKTVKAQIWDTAGQERYRAITSAYYRGAVGALLVYDIAKHVTYENVERWLKELRDHADQNIVIMLVGNKSDLRHLRAVPTDEAKIYAERNQLSFIETSALDSTNVEAAFTNILTEIYKSVSNKHVGTDRQGYGGGSGTIIPSPASDPPKKQCCIP.

GTP is bound at residue 18–26 (GDSGVGKSN). The Effector region motif lies at 40-48 (SKSTIGVEF). GTP contacts are provided by residues 66-70 (DTAGQ), 124-127 (NKSD), and 154-156 (SAL). Positions 187-211 (GYGGGSGTIIPSPASDPPKKQCCIP) are disordered. S-geranylgeranyl cysteine attachment occurs at residues Cys-208 and Cys-209.

Belongs to the small GTPase superfamily. Rab family. In terms of assembly, interacts with rei-1 and rei-2. The GDP-form preferentially binds to rei-1 and rei-2. Expressed weakly in sperm, but more predominantly in oocytes. Expressed in the intestine.

It is found in the cytoplasmic vesicle. The protein resides in the secretory vesicle. Its subcellular location is the endosome. The protein localises to the cytoplasm. It localises to the cytoskeleton. It is found in the spindle. The protein resides in the microtubule organizing center. Its subcellular location is the spindle pole body. The protein localises to the centrosome. It localises to the apical cell membrane. It is found in the cytosol. The protein resides in the recycling endosome membrane. Its subcellular location is the golgi apparatus membrane. The protein localises to the cytoplasmic granule. In terms of biological role, the small GTPases Rab are key regulators of intracellular membrane trafficking, from the formation of transport vesicles to their fusion with membranes. Rabs cycle between an inactive GDP-bound form and an active GTP-bound form that is able to recruit to membranes different set of downstream effectors directly responsible for vesicle formation, movement, tethering and fusion. Involved in regulating the meiotic maturation of oocytes. Plays a role in egg shell formation, regulating exocytosis of chondroitin proteoglycans following fertilization. Controls cortical granule localization and targets them to the plasma membrane for exocytosis. Acts as a major regulator of membrane delivery during cytokinesis. Regulates the cytoskeleton by facilitating astral microtubule elongation and organization during metaphase to ensure proper spindle alignment and polarity in the first embryonic cell division. Maintains normal endoplasmic reticulum morphology during metaphase. Involved in vesicle formation and plasma membrane repair following exposure to pore forming toxins. Regulates endocytic recycling. May play a role in yolk receptor endocytosis in growing oocytes. Plays a role in the shedding of pathogen spores from intestinal cells via its involvement in spore fusion and endocytic trafficking. This chain is Ras-related protein rab-11.1, found in Caenorhabditis elegans.